A 442-amino-acid chain; its full sequence is Glutamate--methylamine ligase (442 aa).

The 85-residue stretch at 13–97 folds into the GS beta-grasp domain; the sequence is NQVKYILAQF…IACDGHTHGK (85 aa). In terms of domain architecture, GS catalytic spans 103–442; the sequence is TRVVLKKQLE…WEVNSYLEFF (340 aa).

Belongs to the glutamine synthetase family. Type 3 subfamily. Mg(2+) serves as cofactor.

The enzyme catalyses methylamine + L-glutamate + ATP = N(5)-methyl-L-glutamine + ADP + phosphate + H(+). Its function is as follows. Catalyzes the formation of N(5)-methyl-L-glutamine from glutamate and methylamine. This Methyloversatilis universalis (strain ATCC BAA-1314 / DSM 25237 / JCM 13912 / CCUG 52030 / FAM5) protein is Glutamate--methylamine ligase.